Here is a 97-residue protein sequence, read N- to C-terminus: Co-chaperonin GroES (97 aa).

The protein belongs to the GroES chaperonin family. Heptamer of 7 subunits arranged in a ring. Interacts with the chaperonin GroEL.

The protein resides in the cytoplasm. Together with the chaperonin GroEL, plays an essential role in assisting protein folding. The GroEL-GroES system forms a nano-cage that allows encapsulation of the non-native substrate proteins and provides a physical environment optimized to promote and accelerate protein folding. GroES binds to the apical surface of the GroEL ring, thereby capping the opening of the GroEL channel. The polypeptide is Co-chaperonin GroES (Baumannia cicadellinicola subsp. Homalodisca coagulata).